Reading from the N-terminus, the 439-residue chain is Probable non-inhibitory serpin-Z9 (439 aa).

The disordered stretch occupies residues Arg-12–Pro-44. The segment covering Ala-31 to Pro-44 has biased composition (pro residues). An RCL region spans residues Gly-389–Pro-413.

The protein belongs to the serpin family.

In Oryza sativa subsp. japonica (Rice), this protein is Probable non-inhibitory serpin-Z9.